A 553-amino-acid polypeptide reads, in one-letter code: Zinc finger protein with KRAB and SCAN domains 3 (553 aa).

Residues 28–49 (EQEESSPLAEETSWLGSPGPDR) form a disordered region. A phosphoserine mark is found at Ser33 and Ser44. An SCAN box domain is found at 51–133 (RQRFRAFRYP…ALLEYLDRQL (83 aa)). Thr136 carries the phosphothreonine modification. Lys176 participates in a covalent cross-link: Glycyl lysine isopeptide (Lys-Gly) (interchain with G-Cter in SUMO2). Thr206 carries the post-translational modification Phosphothreonine. In terms of domain architecture, KRAB spans 213-273 (LKMEDVAPVL…RAEEYRDQKP (61 aa)). Phosphoserine is present on Ser223. 5 consecutive C2H2-type zinc fingers follow at residues 313–335 (FYCR…KRIH), 341–363 (YECE…QRVH), 369–391 (YECE…QRTH), 397–419 (YECD…HRIH), and 425–447 (YQCN…QRTH). Phosphothreonine is present on Thr448. 2 C2H2-type zinc fingers span residues 479-501 (YQCN…QKVH) and 507-529 (FECQ…QRRH).

The protein belongs to the krueppel C2H2-type zinc-finger protein family. In terms of tissue distribution, expressed in heart, brain, spleen, lung, liver, skeletal muscle, kidney and testis.

The protein resides in the nucleus. Its subcellular location is the cytoplasm. Functionally, transcriptional factor that binds to the consensus sequence 5'-[GT][AG][AGT]GGGG-3' and acts as a repressor of autophagy. Specifically represses expression of genes involved in autophagy and lysosome biogenesis/function such as MAP1LC3B, ULK1 or WIPI2. Associates with chromatin at the ITGB4 and VEGF promoters. This chain is Zinc finger protein with KRAB and SCAN domains 3 (Zkscan3), found in Mus musculus (Mouse).